We begin with the raw amino-acid sequence, 131 residues long: Small ribosomal subunit protein uS8 (131 aa).

The protein belongs to the universal ribosomal protein uS8 family. As to quaternary structure, part of the 30S ribosomal subunit. Contacts proteins S5 and S12.

One of the primary rRNA binding proteins, it binds directly to 16S rRNA central domain where it helps coordinate assembly of the platform of the 30S subunit. This Methylococcus capsulatus (strain ATCC 33009 / NCIMB 11132 / Bath) protein is Small ribosomal subunit protein uS8.